A 719-amino-acid polypeptide reads, in one-letter code: Solute carrier family 15 member 2 (719 aa).

Topologically, residues 1 to 43 are cytoplasmic; it reads MGKMKDKDVDAEKYEKAQRSPKLCGTNYPVSIAFIVVNEFCER. The helical transmembrane segment at 44–61 threads the bilayer; sequence FSYYGMKAVLTLYFMNYL. The Extracellular segment spans residues 62 to 69; that stretch reads HWDKNLST. N-linked (GlcNAc...) asparagine glycosylation occurs at Asn-66. A helical transmembrane segment spans residues 70–90; the sequence is AIYHAFSGLCYFTPLLGALIA. The Cytoplasmic segment spans residues 91–99; the sequence is DSWLGKFKT. The helical transmembrane segment at 100–120 threads the bilayer; sequence IIYLSIVYVIGHVVKSVGAIP. Residues 121 to 125 lie on the Extracellular side of the membrane; the sequence is DVGDS. Residues 126–146 form a helical membrane-spanning segment; it reads TVHIALSMVGLGLIALGTGGI. The Cytoplasmic segment spans residues 147–169; sequence KPCVAAFGGDQFDEDNIDERRKF. Residues 170–190 form a helical membrane-spanning segment; the sequence is FSIFYMSINAGSVLSTIITPI. The Extracellular segment spans residues 191 to 201; sequence LRGDVQCFGGD. The helical transmembrane segment at 202–222 threads the bilayer; it reads CYALAFGVPAALMVIALVVFI. Over 223–280 the chain is Cytoplasmic; the sequence is SGSGLYKKSPPEGNVLVRVCKCIGFAISNRWTNSKKSPKRSHWLDWAEEKYSKRLIQE. A helical transmembrane segment spans residues 281 to 301; the sequence is IKMVCRVLVLYIPLPMFWALF. Residues 302–334 are Extracellular-facing; it reads DQQGSRWTLQATRMNMDFGGGFIIKPDQMQMLN. Residues 335–355 traverse the membrane as a helical segment; it reads ALLILVFIPIFDMGIYPLVGL. Residues 356-367 are Cytoplasmic-facing; it reads CRIKLTPLKKMA. Residues 368–388 traverse the membrane as a helical segment; that stretch reads TGMILAALAFCAATAVEVYVI. The Extracellular portion of the chain corresponds to 389–594; sequence KTVVEPPPAK…QANNIHIGWQ (206 aa). Residues 389–594 form an extracellular domain (ECD) region; the sequence is KTVVEPPPAK…QANNIHIGWQ (206 aa). Asn-481, Asn-513, and Asn-532 each carry an N-linked (GlcNAc...) asparagine glycan. A helical transmembrane segment spans residues 595–615; the sequence is IPQYVFLTAGEVMFSITGLEF. Topologically, residues 616–626 are cytoplasmic; sequence SYSQAPASMKS. The helical transmembrane segment at 627 to 647 threads the bilayer; it reads VLQAGWLMTVAFGNVIVLIVA. Residues 648 to 657 are Extracellular-facing; it reads EGAGMEQWVE. Residues 658-678 form a helical membrane-spanning segment; the sequence is FLLFAALLVAVSIIFSIMAYF. Over 679–719 the chain is Cytoplasmic; sequence YTYVDPDQLDKLFKEDGDGGKVESSKKDELSLGDMPKQTKM. Positions 695–708 are enriched in basic and acidic residues; the sequence is GDGGKVESSKKDEL. The segment at 695–719 is disordered; it reads GDGGKVESSKKDELSLGDMPKQTKM.

The protein belongs to the major facilitator superfamily. Proton-dependent oligopeptide transporter (POT/PTR) (TC 2.A.17) family. As to expression, expressed in kidney, brain and gut. Also expressed weakly in eye, gill and skeletal muscle.

The protein localises to the apical cell membrane. It localises to the cytoplasmic vesicle. Its subcellular location is the phagosome membrane. The protein resides in the cell membrane. The catalysed reaction is a dipeptide(out) + 2 H(+)(out) = a dipeptide(in) + 2 H(+)(in). It carries out the reaction N-acetyl-D-muramoyl-L-alanyl-D-isoglutamine(out) + 3 H(+)(out) = N-acetyl-D-muramoyl-L-alanyl-D-isoglutamine(in) + 3 H(+)(in). It catalyses the reaction glycyl-L-leucine(out) + 2 H(+)(out) = glycyl-L-leucine(in) + 2 H(+)(in). The enzyme catalyses glycyl-L-lysine(out) + 2 H(+)(out) = glycyl-L-lysine(in) + 2 H(+)(in). The catalysed reaction is glycyl-L-glutamate(out) + 3 H(+)(out) = glycyl-L-glutamate(in) + 3 H(+)(in). It carries out the reaction L-alanyl-L-alanine(out) + 2 H(+)(out) = L-alanyl-L-alanine(in) + 2 H(+)(in). It catalyses the reaction an L-amino acid tripeptide(out) + 2 H(+)(out) = an L-amino acid tripeptide(in) + 2 H(+)(in). The enzyme catalyses carnosine(out) + 2 H(+)(out) = carnosine(in) + 2 H(+)(in). Its function is as follows. Proton-coupled amino-acid transporter that transports oligopeptides of 2 to 4 amino acids with a preference for dipeptides. Transports neutral and anionic dipeptides with a proton to peptide stoichiometry of 2:1 or 3:1. The protein is Solute carrier family 15 member 2 of Danio rerio (Zebrafish).